Reading from the N-terminus, the 186-residue chain is Calcium load-activated calcium channel homolog (186 aa).

The Cytoplasmic segment spans residues 1–6 (MLGDCL). A helical membrane pass occupies residues 7 to 27 (LIIAIAFGTALAGEGITWLLV). Over 28–87 (YRSDHYKRLKADMDKKTKKLEKKKQEVGDTNDKNIKRKLEREEERLKATNRDMSMFKMKS) the chain is Lumenal. Residues 30 to 86 (SDHYKRLKADMDKKTKKLEKKKQEVGDTNDKNIKRKLEREEERLKATNRDMSMFKMK) are a coiled coil. A helical transmembrane segment spans residues 88-108 (MFAIGLAFTALLSTFNSIFEG). Topologically, residues 109–134 (RVVAKLPFYPIGFIQGLSHRNLIGED) are cytoplasmic. The segment at residues 135–151 (MTDCSFIFLYILCTMTV) is an intramembrane region (pore-forming). Over 152–186 (RQNLQKILGFAPSRAMARQQSSPWAPPNSQMNYLR) the chain is Cytoplasmic.

It belongs to the TMCO1 family. As to quaternary structure, homodimer and homotetramer.

It localises to the endoplasmic reticulum membrane. In terms of biological role, calcium-selective channel required to prevent calcium stores from overfilling. The polypeptide is Calcium load-activated calcium channel homolog (Caenorhabditis elegans).